We begin with the raw amino-acid sequence, 888 residues long: Alanine--tRNA ligase (888 aa).

Residues H573, H577, C676, and H680 each contribute to the Zn(2+) site.

The protein belongs to the class-II aminoacyl-tRNA synthetase family. Zn(2+) serves as cofactor.

It is found in the cytoplasm. The enzyme catalyses tRNA(Ala) + L-alanine + ATP = L-alanyl-tRNA(Ala) + AMP + diphosphate. Catalyzes the attachment of alanine to tRNA(Ala) in a two-step reaction: alanine is first activated by ATP to form Ala-AMP and then transferred to the acceptor end of tRNA(Ala). Also edits incorrectly charged Ser-tRNA(Ala) and Gly-tRNA(Ala) via its editing domain. This chain is Alanine--tRNA ligase, found in Corynebacterium glutamicum (strain R).